The chain runs to 319 residues: tRNA(Ile)-lysidine synthase (319 aa).

32-37 (SGGSDS) is an ATP binding site.

It belongs to the tRNA(Ile)-lysidine synthase family.

Its subcellular location is the cytoplasm. It carries out the reaction cytidine(34) in tRNA(Ile2) + L-lysine + ATP = lysidine(34) in tRNA(Ile2) + AMP + diphosphate + H(+). Functionally, ligates lysine onto the cytidine present at position 34 of the AUA codon-specific tRNA(Ile) that contains the anticodon CAU, in an ATP-dependent manner. Cytidine is converted to lysidine, thus changing the amino acid specificity of the tRNA from methionine to isoleucine. The polypeptide is tRNA(Ile)-lysidine synthase (Chlamydia pneumoniae (Chlamydophila pneumoniae)).